A 628-amino-acid polypeptide reads, in one-letter code: Probable potassium transport system protein Kup (628 aa).

A run of 12 helical transmembrane segments spans residues 12–32 (ALPL…IGTS), 57–77 (LLSL…VMLV), 106–126 (WYLL…GVLT), 141–161 (ISPA…AAVF), 174–194 (FYGP…VYGI), 219–239 (LAGV…ALYA), 253–273 (WLFV…AILL), 295–315 (LLFL…TGVF), 343–363 (IYVG…VLGF), 369–389 (LASA…ILFV), 402–422 (AVIA…SANL), and 425–445 (LHEG…VMVS).

The protein belongs to the HAK/KUP transporter (TC 2.A.72) family.

It is found in the cell inner membrane. It carries out the reaction K(+)(in) + H(+)(in) = K(+)(out) + H(+)(out). Transport of potassium into the cell. Likely operates as a K(+):H(+) symporter. The sequence is that of Probable potassium transport system protein Kup from Azorhizobium caulinodans (strain ATCC 43989 / DSM 5975 / JCM 20966 / LMG 6465 / NBRC 14845 / NCIMB 13405 / ORS 571).